Reading from the N-terminus, the 71-residue chain is Small ribosomal subunit protein bS21 (71 aa).

This sequence belongs to the bacterial ribosomal protein bS21 family.

This Shewanella amazonensis (strain ATCC BAA-1098 / SB2B) protein is Small ribosomal subunit protein bS21.